Reading from the N-terminus, the 382-residue chain is Dodecanoyl-[acyl-carrier-protein] hydrolase, chloroplastic (382 aa).

The transit peptide at 1–83 (MATTSLASAF…FSAAEKQWTN (83 aa)) directs the protein to the chloroplast. Catalysis depends on residues Asn283, His285, and Cys320.

Belongs to the acyl-ACP thioesterase family.

Its subcellular location is the plastid. It localises to the chloroplast. The enzyme catalyses dodecanoyl-[ACP] + H2O = dodecanoate + holo-[ACP] + H(+). Functionally, plays an essential role in chain termination during de novo fatty acid synthesis. High thioesterase activity for myristoyl-ACP. This chain is Dodecanoyl-[acyl-carrier-protein] hydrolase, chloroplastic, found in Cinnamomum camphora (Camphor tree).